We begin with the raw amino-acid sequence, 341 residues long: tRNA dimethylallyltransferase (341 aa).

15-22 (GPTAAGKT) provides a ligand contact to ATP. A substrate-binding site is contributed by 17–22 (TAAGKT). Interaction with substrate tRNA regions lie at residues 44 to 47 (DSAL), 168 to 172 (QRIQR), 253 to 258 (RCVGYR), and 302 to 309 (KRQITWLR).

The protein belongs to the IPP transferase family. In terms of assembly, monomer. It depends on Mg(2+) as a cofactor.

The catalysed reaction is adenosine(37) in tRNA + dimethylallyl diphosphate = N(6)-dimethylallyladenosine(37) in tRNA + diphosphate. Its function is as follows. Catalyzes the transfer of a dimethylallyl group onto the adenine at position 37 in tRNAs that read codons beginning with uridine, leading to the formation of N6-(dimethylallyl)adenosine (i(6)A). This Verminephrobacter eiseniae (strain EF01-2) protein is tRNA dimethylallyltransferase.